We begin with the raw amino-acid sequence, 658 residues long: MEKASGRKSLALSTAENGIENAGLELTEEGINSEQTRRMEVQGHSLSDDVRPATHQRSYLQPLTKARTFCQRHASLFKKILLGLLCLAYAAYFLAACILDFQRALALFVITCLVILVLLLHFLKKFLGKKLTRCLKPFKNSQLRLWIKRVFAGVSLVGLILWLALDTAQRPEQLISFAGICMFVLILFACSKHHSAVSWRTVFWGLGLQFVFGLLVIRTDPGFIAFQWLGDQVQIFLAYTVAGSSFVLGDTLVNDVFAFQSLPIIIFFGCVMSILYYLGLVQWVVQKIAWFLQVTMRTTATETLAVAGNIFVGMTEAPLLIRPYLADLTLSEIHAVMTSGFATISGTVLGAFISFGIDASSLISASVMGAPCALALSKLVYPEEEESKFKSKEGVKLPRGKESNVLEAASNGATDAIALVANVAANLVAFLAVLAFINAALSWLGELVDIQGLTFQVICSYILRPMVYMMGVEWTDCPMVAEMVGIKFFTNEFVAYQQLSQYKKKRLSGMEEWIDGQKQWISVRAEVITTFSLCGFANLSSIGITLGGLTSMVPHRKSDLSKVVIRALFTGSCVSFISACVAGILYVPRGAETDCVSFLSTSFTNRSYETYVCCRELFQNTYLNGTNPPSFSGAWEDKAFSAMALANCCGFYNNTVCA.

Residues 1 to 75 are Cytoplasmic-facing; it reads MEKASGRKSL…ARTFCQRHAS (75 aa). A helical membrane pass occupies residues 76–99; it reads LFKKILLGLLCLAYAAYFLAACIL. Over 100–104 the chain is Extracellular; the sequence is DFQRA. Residues 105 to 123 form a helical membrane-spanning segment; it reads LALFVITCLVILVLLLHFL. The Cytoplasmic portion of the chain corresponds to 124–142; sequence KKFLGKKLTRCLKPFKNSQ. A helical membrane pass occupies residues 143–162; it reads LRLWIKRVFAGVSLVGLILW. The Extracellular portion of the chain corresponds to 163–173; the sequence is LALDTAQRPEQ. The chain crosses the membrane as a helical span at residues 174–190; it reads LISFAGICMFVLILFAC. Residues 191–196 are Cytoplasmic-facing; the sequence is SKHHSA. Residues 197–217 traverse the membrane as a helical segment; it reads VSWRTVFWGLGLQFVFGLLVI. The Extracellular portion of the chain corresponds to 218 to 256; it reads RTDPGFIAFQWLGDQVQIFLAYTVAGSSFVLGDTLVNDV. A helical transmembrane segment spans residues 257-278; it reads FAFQSLPIIIFFGCVMSILYYL. The Cytoplasmic portion of the chain corresponds to 279 to 289; sequence GLVQWVVQKIA. A helical transmembrane segment spans residues 290–313; sequence WFLQVTMRTTATETLAVAGNIFVG. Topologically, residues 314–332 are extracellular; that stretch reads MTEAPLLIRPYLADLTLSE. A helical transmembrane segment spans residues 333–355; that stretch reads IHAVMTSGFATISGTVLGAFISF. The Cytoplasmic portion of the chain corresponds to 356 to 361; sequence GIDASS. Residues 362–381 form a helical membrane-spanning segment; that stretch reads LISASVMGAPCALALSKLVY. Topologically, residues 382–418 are extracellular; sequence PEEEESKFKSKEGVKLPRGKESNVLEAASNGATDAIA. A helical membrane pass occupies residues 419–441; it reads LVANVAANLVAFLAVLAFINAAL. Topologically, residues 442–452 are cytoplasmic; that stretch reads SWLGELVDIQG. The chain crosses the membrane as a helical span at residues 453-474; sequence LTFQVICSYILRPMVYMMGVEW. At 475–529 the chain is on the extracellular side; it reads TDCPMVAEMVGIKFFTNEFVAYQQLSQYKKKRLSGMEEWIDGQKQWISVRAEVIT. Residues 530-553 traverse the membrane as a helical segment; sequence TFSLCGFANLSSIGITLGGLTSMV. Residues 554–564 lie on the Cytoplasmic side of the membrane; sequence PHRKSDLSKVV. The helical transmembrane segment at 565 to 587 threads the bilayer; it reads IRALFTGSCVSFISACVAGILYV. Topologically, residues 588 to 658 are extracellular; sequence PRGAETDCVS…CGFYNNTVCA (71 aa). N-linked (GlcNAc...) asparagine glycosylation is present at asparagine 653.

Belongs to the concentrative nucleoside transporter (CNT) (TC 2.A.41) family. In terms of processing, N-glycosylated. N-glycosylation is required for localization to the plasma membrane and the transporter activity.

It is found in the cell membrane. The protein resides in the apical cell membrane. It carries out the reaction uridine(out) + Na(+)(out) = uridine(in) + Na(+)(in). The enzyme catalyses thymidine(out) + Na(+)(out) = thymidine(in) + Na(+)(in). The catalysed reaction is cytidine(out) + Na(+)(out) = cytidine(in) + Na(+)(in). It catalyses the reaction adenosine(out) + Na(+)(out) = adenosine(in) + Na(+)(in). With respect to regulation, due to its high apparent affinity but slow transport, adenosine could act as a negative regulator of pyrimidine transport under some conditions. Sodium and pyrimidine nucleoside symporter of the plasma membrane that imports uridine, thymidine and cytidine into cells by coupling their transport to the transmembrane sodium electrochemical gradient. Also transports adenosine, an atypical substrate transported with high apparent affinity, but low maximum velocity. Therefore, exhibits the transport characteristics of the nucleoside transport system cit or N2 subtype (N2/cit). Involved in renal nucleoside (re)absorption. This chain is Sodium/nucleoside cotransporter 1 (SLC28A1), found in Oryctolagus cuniculus (Rabbit).